The chain runs to 175 residues: Ribulose bisphosphate carboxylase small subunit, chloroplastic 2 (175 aa).

Residues 1 to 46 constitute a chloroplast transit peptide; the sequence is MAPAVMASSATTVAPFQGLKSTAGLPISCRSGSTGLSSVSNGGRIR.

The protein belongs to the RuBisCO small chain family. Heterohexadecamer of 8 large and 8 small subunits.

It localises to the plastid. Its subcellular location is the chloroplast. Its function is as follows. RuBisCO catalyzes two reactions: the carboxylation of D-ribulose 1,5-bisphosphate, the primary event in carbon dioxide fixation, as well as the oxidative fragmentation of the pentose substrate. Both reactions occur simultaneously and in competition at the same active site. Although the small subunit is not catalytic it is essential for maximal activity. In Triticum aestivum (Wheat), this protein is Ribulose bisphosphate carboxylase small subunit, chloroplastic 2.